A 549-amino-acid chain; its full sequence is Hydroxylamine reductase (549 aa).

[4Fe-4S] cluster contacts are provided by cysteine 3, cysteine 6, cysteine 15, and cysteine 21. Hybrid [4Fe-2O-2S] cluster-binding residues include histidine 244, glutamate 268, cysteine 313, cysteine 405, cysteine 433, cysteine 458, glutamate 492, and lysine 494. Cysteine 405 is subject to Cysteine persulfide.

Belongs to the HCP family. The cofactor is [4Fe-4S] cluster. Requires hybrid [4Fe-2O-2S] cluster as cofactor.

Its subcellular location is the cytoplasm. The catalysed reaction is A + NH4(+) + H2O = hydroxylamine + AH2 + H(+). Its function is as follows. Catalyzes the reduction of hydroxylamine to form NH(3) and H(2)O. This is Hydroxylamine reductase from Crocosphaera subtropica (strain ATCC 51142 / BH68) (Cyanothece sp. (strain ATCC 51142)).